The primary structure comprises 89 residues: Large ribosomal subunit protein bL27 (89 aa).

The protein belongs to the bacterial ribosomal protein bL27 family.

This chain is Large ribosomal subunit protein bL27, found in Ruegeria sp. (strain TM1040) (Silicibacter sp.).